The chain runs to 320 residues: Cytochrome f (320 aa).

A signal peptide spans 1-35 (MENRNTFSWVKEQITRSISVSIMIYVITRTSISNA). 4 residues coordinate heme: Tyr-36, Cys-56, Cys-59, and His-60. Residues 286 to 305 (VQGLLFFFASVILAQVFLVL) form a helical membrane-spanning segment.

It belongs to the cytochrome f family. As to quaternary structure, the 4 large subunits of the cytochrome b6-f complex are cytochrome b6, subunit IV (17 kDa polypeptide, petD), cytochrome f and the Rieske protein, while the 4 small subunits are PetG, PetL, PetM and PetN. The complex functions as a dimer. Heme serves as cofactor.

The protein localises to the plastid. It is found in the chloroplast thylakoid membrane. Its function is as follows. Component of the cytochrome b6-f complex, which mediates electron transfer between photosystem II (PSII) and photosystem I (PSI), cyclic electron flow around PSI, and state transitions. This chain is Cytochrome f (petA), found in Triticum aestivum (Wheat).